A 194-amino-acid polypeptide reads, in one-letter code: MITIGLTGGIGSGKSTVSSRLAELGAFIVDADLVAREIVEPGQPALAELADAFDGVLNPDGTLNRGELARQAFATPEATEKLNAITHPRIRARTEELFKQGRESGAQVLVYDMPLLIENGEVDKVDHVLVVDAPDELRIDRLVQHRGLDENDARRRIAAQIDRATRLNAADTVLDNSGTVEQLLEQVDGFWGGL.

In terms of domain architecture, DPCK spans T3 to L194. An ATP-binding site is contributed by G11–T16.

The protein belongs to the CoaE family.

Its subcellular location is the cytoplasm. It catalyses the reaction 3'-dephospho-CoA + ATP = ADP + CoA + H(+). The protein operates within cofactor biosynthesis; coenzyme A biosynthesis; CoA from (R)-pantothenate: step 5/5. Catalyzes the phosphorylation of the 3'-hydroxyl group of dephosphocoenzyme A to form coenzyme A. In Corynebacterium jeikeium (strain K411), this protein is Dephospho-CoA kinase.